A 97-amino-acid polypeptide reads, in one-letter code: MEVTDVRLRRVNTEGRMRAIASITLDHEFVVHDIRVIDGNNGLFVAMPSKRTPDGEFRDIAHPINSGTRSKIQDAVLTEYHRLGELEEVEFEEAGAS.

It belongs to the SpoVG family.

In terms of biological role, essential for sporulation. Interferes with or is a negative regulator of the pathway leading to asymmetric septation. This Bacillus cereus (strain 03BB102) protein is Putative septation protein SpoVG.